The chain runs to 190 residues: DNA-invertase (190 aa).

In terms of domain architecture, Resolvase/invertase-type recombinase catalytic spans 2–135 (ATIGYIRVST…AGLAAARAQG (134 aa)). Residue Ser-10 is the O-(5'-phospho-DNA)-serine intermediate of the active site. The segment at residues 162–181 (RQQLAIIFGIGVSTLYRYFP) is a DNA-binding region (H-T-H motif).

Belongs to the site-specific recombinase resolvase family.

Its function is as follows. A DNA fragment of approximately 900 base pairs, adjacent to the fljB (H2) gene, which specifies the synthesis of phase-2 flagellin, can exist in either orientation with respect to fljB. The orientation of the inversion region controls expression of fljB. The hin gene occupies about two-thirds of the inversion region; it is required for the inversion of the fljB controlling region. This chain is DNA-invertase (hin), found in Salmonella abortus-equi.